Here is a 722-residue protein sequence, read N- to C-terminus: Probable acyl-activating enzyme 16, chloroplastic (722 aa).

The N-terminal 47 residues, 1 to 47 (MASTSLGASILVSHCSSAPEFQVSGMRLVFGYKAFGCRTSRRGFRVR), are a transit peptide targeting the chloroplast.

It belongs to the ATP-dependent AMP-binding enzyme family.

It localises to the plastid. Its subcellular location is the chloroplast. Functionally, may be involved in the activation of fatty acids to acyl-carrier-protein. The polypeptide is Probable acyl-activating enzyme 16, chloroplastic (AAE16) (Arabidopsis thaliana (Mouse-ear cress)).